Here is a 97-residue protein sequence, read N- to C-terminus: Large ribosomal subunit protein eL21 (97 aa).

It belongs to the eukaryotic ribosomal protein eL21 family.

The chain is Large ribosomal subunit protein eL21 (rpl21e) from Archaeoglobus fulgidus (strain ATCC 49558 / DSM 4304 / JCM 9628 / NBRC 100126 / VC-16).